The primary structure comprises 349 residues: KH domain-containing, RNA-binding, signal transduction-associated protein 2 (349 aa).

The region spanning 65 to 135 (LIPVKQYPKF…HLSDELHVLI (71 aa)) is the KH domain. Disordered stretches follow at residues 182–284 (EDSG…DDQT) and 319–349 (PEEW…YGRY). Omega-N-methylarginine is present on residues Arg-230 and Arg-240. Residues 340–349 (GYREHPYGRY) show a composition bias toward basic and acidic residues.

The protein belongs to the KHDRBS family. Self-associates to form homooligomers. Interacts with KHDRBS1/SAM68; heterooligomer formation of KHDRBS family proteins may modulate RNA substrate specificity. Interacts with RBMX. Interacts with SAFB, SFRS9 and YTHDC1. Interacts with FYN and PLCG1 (via SH3 domain). Interacts (phosphorylated) with FYN, GRB2, PLCG1 and RASA1 (via SH2 domain). In terms of processing, methylated. Post-translationally, tyrosine phosphorylated by FYN, PTK6 and SRC. Tyrosine phosphorylated by SRC during mitosis. Highly expressed in brain, lung, kidney and small intestine. Weakly expressed in placenta, liver, spleen, thymus, ovary and colon.

The protein localises to the nucleus. In terms of biological role, RNA-binding protein that plays a role in the regulation of alternative splicing and influences mRNA splice site selection and exon inclusion. Binds both poly(A) and poly(U) homopolymers. Phosphorylation by PTK6 inhibits its RNA-binding ability. Induces an increased concentration-dependent incorporation of exon in CD44 pre-mRNA by direct binding to purine-rich exonic enhancer. Can regulate alternative splicing of NRXN1 in the laminin G-like domain 6 containing the evolutionary conserved neurexin alternative spliced segment 4 (AS4) involved in neurexin selective targeting to postsynaptic partners. Regulates cell-type specific alternative splicing of NRXN1 at AS4 and acts synergystically with SAM68 in exon skipping. In contrast acts antagonistically with SAM68 in NRXN3 exon skipping at AS4. Its phosphorylation by FYN inhibits its ability to regulate splice site selection. May function as an adapter protein for Src kinases during mitosis. This Homo sapiens (Human) protein is KH domain-containing, RNA-binding, signal transduction-associated protein 2 (KHDRBS2).